Consider the following 424-residue polypeptide: Calreticulin (424 aa).

Residues 1–19 (MRLLLCLIFLVFVFNFALS) form the signal peptide. A disulfide bridge links C105 with C137. Positions 109, 111, 128, and 135 each coordinate an alpha-D-glucoside. A run of 7 repeats spans residues 191–202 (IQAGNLADDWEL), 210–221 (DPKQSKPVDWVD), 227–238 (DPEDVKPAGHDD), 246–256 (PEAVKPEDWNE), 260–270 (GEWEAPTIANP), 274–284 (GEWKAKKIPNP), and 288–298 (GEWVHPLIDNP). The interval 191–256 (IQAGNLADDW…EAVKPEDWNE (66 aa)) is 4 X 12 AA approximate repeats. Residues 260 to 298 (GEWEAPTIANPEYKGEWKAKKIPNPEYKGEWVHPLIDNP) form a 3 X 11 AA approximate repeats region. E318 lines the an alpha-D-glucoside pocket. Positions 370–385 (RKKADEKLAAEKAAEK) are enriched in basic and acidic residues. The segment at 370-424 (RKKADEKLAAEKAAEKEAEEADEEEEEVAEEDLVKTDDKKEEVKKSTKKVDHDEL) is disordered. The span at 386-400 (EAEEADEEEEEVAEE) shows a compositional bias: acidic residues. Residues 401 to 424 (DLVKTDDKKEEVKKSTKKVDHDEL) show a composition bias toward basic and acidic residues. The Prevents secretion from ER motif lies at 421–424 (HDEL).

This sequence belongs to the calreticulin family.

It is found in the endoplasmic reticulum lumen. Molecular calcium-binding chaperone promoting folding, oligomeric assembly and quality control in the ER via the calreticulin/calnexin cycle. This lectin may interact transiently with almost all of the monoglucosylated glycoproteins that are synthesized in the ER. This is Calreticulin (crtA) from Dictyostelium discoideum (Social amoeba).